The chain runs to 403 residues: Fasciclin-like arabinogalactan protein 2 (403 aa).

The N-terminal stretch at 1–26 (MAYLRRAATALVLIFQLHLFLSLSNA) is a signal peptide. FAS1 domains follow at residues 27–174 (HNIT…SQVL) and 187–326 (SDLI…DKVL). Residues Asn28, Asn130, Asn164, and Asn248 are each glycosylated (N-linked (GlcNAc...) asparagine). Residues 338 to 371 (SAPAPKSSKKKPKNAEADADGPSADAPSDDDVEV) are disordered. A lipid anchor (GPI-anchor amidated alanine) is attached at Ala378. The propeptide at 379–403 (VSAMITRTSNVVTAIVGLCFGVWLM) is removed in mature form.

It belongs to the fasciclin-like AGP family. Expressed mainly in flowers and to a lesser extent in leaves and roots.

The protein resides in the cell membrane. Its function is as follows. May be a cell surface adhesion protein. The chain is Fasciclin-like arabinogalactan protein 2 (FLA2) from Arabidopsis thaliana (Mouse-ear cress).